The following is a 257-amino-acid chain: UPF0246 protein Ent638_0568 (257 aa).

The protein belongs to the UPF0246 family.

This Enterobacter sp. (strain 638) protein is UPF0246 protein Ent638_0568.